Reading from the N-terminus, the 509-residue chain is ATP synthase subunit alpha (509 aa).

Residue Gly-169–Thr-176 coordinates ATP.

The protein belongs to the ATPase alpha/beta chains family. In terms of assembly, F-type ATPases have 2 components, CF(1) - the catalytic core - and CF(0) - the membrane proton channel. CF(1) has five subunits: alpha(3), beta(3), gamma(1), delta(1), epsilon(1). CF(0) has three main subunits: a(1), b(2) and c(9-12). The alpha and beta chains form an alternating ring which encloses part of the gamma chain. CF(1) is attached to CF(0) by a central stalk formed by the gamma and epsilon chains, while a peripheral stalk is formed by the delta and b chains.

The protein localises to the cell inner membrane. The enzyme catalyses ATP + H2O + 4 H(+)(in) = ADP + phosphate + 5 H(+)(out). Its function is as follows. Produces ATP from ADP in the presence of a proton gradient across the membrane. The alpha chain is a regulatory subunit. This chain is ATP synthase subunit alpha, found in Rhizobium johnstonii (strain DSM 114642 / LMG 32736 / 3841) (Rhizobium leguminosarum bv. viciae).